A 504-amino-acid chain; its full sequence is Anaerobic nitric oxide reductase transcription regulator NorR (504 aa).

D57 is subject to 4-aspartylphosphate. A Sigma-54 factor interaction domain is found at 187 to 416 (MIGLSPGMTQ…LEHAIHRAVV (230 aa)). ATP-binding positions include 215-222 (GETGTGKE) and 278-287 (ADNGTLFLDE). Positions 479-498 (WAACARMLETDVANLHRLAK) form a DNA-binding region, H-T-H motif.

Its pathway is nitrogen metabolism; nitric oxide reduction. In terms of biological role, required for the expression of anaerobic nitric oxide (NO) reductase, acts as a transcriptional activator for at least the norVW operon. Activation also requires sigma-54. The protein is Anaerobic nitric oxide reductase transcription regulator NorR of Escherichia coli (strain 55989 / EAEC).